The sequence spans 462 residues: uncharacterized protein (462 aa).

One can recognise a TRAM domain in the interval 12-70; that stretch reads MLKKNDIIQVAISDLSHEGAGVAKHDGFVFFVDNALPEEVIDMRVLKVNKNSGFGKVEA. S-adenosyl-L-methionine is bound by residues Gln294, Tyr323, Glu344, and Asp392. Residue Cys419 is the Nucleophile of the active site.

This sequence belongs to the class I-like SAM-binding methyltransferase superfamily. RNA M5U methyltransferase family.

This is an uncharacterized protein from Streptococcus pyogenes serotype M1.